Consider the following 237-residue polypeptide: 1-(5-phosphoribosyl)-5-[(5-phosphoribosylamino)methylideneamino] imidazole-4-carboxamide isomerase (237 aa).

Asp-8 serves as the catalytic Proton acceptor. The active-site Proton donor is Asp-129.

Belongs to the HisA/HisF family.

It localises to the cytoplasm. The catalysed reaction is 1-(5-phospho-beta-D-ribosyl)-5-[(5-phospho-beta-D-ribosylamino)methylideneamino]imidazole-4-carboxamide = 5-[(5-phospho-1-deoxy-D-ribulos-1-ylimino)methylamino]-1-(5-phospho-beta-D-ribosyl)imidazole-4-carboxamide. Its pathway is amino-acid biosynthesis; L-histidine biosynthesis; L-histidine from 5-phospho-alpha-D-ribose 1-diphosphate: step 4/9. This chain is 1-(5-phosphoribosyl)-5-[(5-phosphoribosylamino)methylideneamino] imidazole-4-carboxamide isomerase, found in Acetivibrio thermocellus (strain ATCC 27405 / DSM 1237 / JCM 9322 / NBRC 103400 / NCIMB 10682 / NRRL B-4536 / VPI 7372) (Clostridium thermocellum).